A 490-amino-acid chain; its full sequence is Homoserine O-acetyltransferase (490 aa).

Residues 48–354 form the AB hydrolase-1 domain; it reads NVILVCHALT…NSEYGHDAFL (307 aa). Serine 153 (nucleophile) is an active-site residue. Residue arginine 223 participates in substrate binding. Residues aspartate 317 and histidine 350 contribute to the active site. Aspartate 351 contacts substrate. 2 consecutive CBS domains span residues 377-434 and 438-490; these read MSHT…ANSI and MTKN…LYEK.

It belongs to the AB hydrolase superfamily. MetX family. In terms of assembly, homodimer.

Its subcellular location is the cytoplasm. It carries out the reaction L-homoserine + acetyl-CoA = O-acetyl-L-homoserine + CoA. It participates in amino-acid biosynthesis; L-methionine biosynthesis via de novo pathway; O-acetyl-L-homoserine from L-homoserine: step 1/1. Functionally, transfers an acetyl group from acetyl-CoA to L-homoserine, forming acetyl-L-homoserine. The chain is Homoserine O-acetyltransferase from Methanosphaera stadtmanae (strain ATCC 43021 / DSM 3091 / JCM 11832 / MCB-3).